Reading from the N-terminus, the 139-residue chain is Succinate dehydrogenase assembly factor 2, mitochondrial (139 aa).

Residues 1–28 constitute a mitochondrion transit peptide; sequence MLRKTNLSNITTLLRSARCMNRMPQLRF.

This sequence belongs to the SDHAF2 family. In terms of assembly, interacts with the flavoprotein subunit within the SDH catalytic dimer.

The protein resides in the mitochondrion. It localises to the mitochondrion matrix. Functionally, plays an essential role in the assembly of succinate dehydrogenase (SDH), an enzyme complex (also referred to as respiratory complex II) that is a component of both the tricarboxylic acid (TCA) cycle and the mitochondrial electron transport chain, and which couples the oxidation of succinate to fumarate with the reduction of ubiquinone (coenzyme Q) to ubiquinol. Required for flavinylation (covalent attachment of FAD) of the flavoprotein subunit of the SDH catalytic dimer. This is Succinate dehydrogenase assembly factor 2, mitochondrial from Schizosaccharomyces pombe (strain 972 / ATCC 24843) (Fission yeast).